The following is a 742-amino-acid chain: NAD(P)H-quinone oxidoreductase subunit 5, chloroplastic (742 aa).

16 helical membrane passes run 9–29 (WIIPFLPLPVPLLIGAGLLFF), 39–59 (IWAFSSISLLSIVMIFSMKLA), 91–111 (PLTSIMSMLITTVAILVLIYS), 125–145 (FAYMSFFNTSMLGLVTSSNLI), 147–167 (IYIFWELVGMCSYLLIGFWFT), 185–205 (GDFGLLLGILGLYWITGSFEF), 224–244 (LFCILCAFLLFAGAVAKSAQF), 258–278 (TPISALIHAATMVAAGIFLVA), 280–300 (LLPLFVVIPYIMYVISFIGII), 327–347 (LGYMMLALGMGSYRTALFHLI), 354–374 (ALLFLASGSLIHSMGTIVGYS), 396–416 (TSFLIGTLSLCGIPPLACFWS), 425–445 (WVYSPIFAIIAYFTAGLTAFY), 549–569 (LFPLIILIMFTLFVGFIGIPF), 603–623 (FVINAIFSISIAFFGIFIAFF), and 721–741 (ISSYLFWYLLYVSIFLFIFTF).

This sequence belongs to the complex I subunit 5 family. In terms of assembly, NDH is composed of at least 16 different subunits, 5 of which are encoded in the nucleus.

The protein localises to the plastid. It is found in the chloroplast thylakoid membrane. It catalyses the reaction a plastoquinone + NADH + (n+1) H(+)(in) = a plastoquinol + NAD(+) + n H(+)(out). The catalysed reaction is a plastoquinone + NADPH + (n+1) H(+)(in) = a plastoquinol + NADP(+) + n H(+)(out). NDH shuttles electrons from NAD(P)H:plastoquinone, via FMN and iron-sulfur (Fe-S) centers, to quinones in the photosynthetic chain and possibly in a chloroplast respiratory chain. The immediate electron acceptor for the enzyme in this species is believed to be plastoquinone. Couples the redox reaction to proton translocation, and thus conserves the redox energy in a proton gradient. This Spinacia oleracea (Spinach) protein is NAD(P)H-quinone oxidoreductase subunit 5, chloroplastic (ndhF).